We begin with the raw amino-acid sequence, 554 residues long: Probable ATP-binding cassette sub-family F member 3 homolog (554 aa).

ABC transporter domains follow at residues 89-285 (GDLH…ASAR) and 351-554 (IEFV…GLGV). Residues 122–129 (GRNGIGKT) and 383–390 (GANGQGKS) contribute to the ATP site.

Belongs to the ABC transporter superfamily. ABCF family. EF3 subfamily.

This is Probable ATP-binding cassette sub-family F member 3 homolog from Encephalitozoon cuniculi (strain GB-M1) (Microsporidian parasite).